Consider the following 906-residue polypeptide: Alanine--tRNA ligase, chloroplastic/mitochondrial (906 aa).

Residues 1 to 10 (MSAATERERL) show a composition bias toward basic and acidic residues. Residues 1-22 (MSAATERERLTNANPNARGKDN) form a disordered region. 4 residues coordinate Zn(2+): histidine 589, histidine 593, cysteine 691, and histidine 695.

This sequence belongs to the class-II aminoacyl-tRNA synthetase family. As to quaternary structure, monomer. Requires Zn(2+) as cofactor.

It localises to the plastid. The protein localises to the chloroplast. It is found in the mitochondrion. The enzyme catalyses tRNA(Ala) + L-alanine + ATP = L-alanyl-tRNA(Ala) + AMP + diphosphate. In terms of biological role, catalyzes the attachment of alanine to tRNA(Ala) in a two-step reaction: alanine is first activated by ATP to form Ala-AMP and then transferred to the acceptor end of tRNA(Ala). Also edits incorrectly charged tRNA(Ala) via its editing domain. The chain is Alanine--tRNA ligase, chloroplastic/mitochondrial from Ostreococcus lucimarinus (strain CCE9901).